Here is a 1516-residue protein sequence, read N- to C-terminus: Receptor-type tyrosine-protein phosphatase S (1516 aa).

Residues 1 to 28 (MRILPSPGMPALLSLVSLLSVLLMGCVA) form the signal peptide. Over 29 to 854 (ESPPVFIKKP…PQPIIDGEEG (826 aa)) the chain is Extracellular. 3 consecutive Ig-like C2-type domains span residues 32–122 (PVFI…AKLT), 134–223 (PNID…ANLY), and 235–317 (PRFS…AQIT). Cystine bridges form between Cys53/Cys106 and Cys155/Cys206. Positions 67 to 71 (KKGKK) are important for binding to glycosaminoglycan chains. Residues Asn253 and Asn298 are each glycosylated (N-linked (GlcNAc...) asparagine). Residues Cys256 and Cys301 are joined by a disulfide bond. 4 consecutive Fibronectin type-III domains span residues 324-414 (APGT…TGEQ), 419-513 (APRN…TQQG), 517-606 (QPMN…TLQS), and 608-692 (LPKN…TAAN). The helical transmembrane segment at 855 to 875 (LIWVIGPVLAVVFIICIVIAI) threads the bilayer. Residues 876–1516 (LLYKNKRKDS…YLGSFDHYAT (641 aa)) are Cytoplasmic-facing. Tyrosine-protein phosphatase domains are found at residues 961–1216 (LSQE…LLEA) and 1248–1507 (MELE…ALEY). Catalysis depends on phosphocysteine intermediate residues Cys1157 and Cys1448.

This sequence belongs to the protein-tyrosine phosphatase family. Receptor class 2A subfamily. Homodimer. Binding to large heparan sulfate proteoglycan structures promotes oligomerization. Binding to chondroitin sulfate proteoglycan does not lead to oligomerization. Interacts (via Ig-like domains) with NTRK1 and NTRK3, but does not form detectable complexes with NTRK2. Interacts (via extracellular domain) with the heparan sulfate proteoglycans AGRN and COL18A1. Post-translationally, a cleavage occurs, separating the extracellular domain from the transmembrane segment. This process called 'ectodomain shedding' is thought to be involved in receptor desensitization, signal transduction and/or membrane localization. As to expression, detected in embryonic brain, dorsal root ganglion and spinal cord. Detected in embryonic retina (at protein level). Detected in embryonic brain, spinal cord, dorsal root ganglion, trigeminal ganglion, ganglia associated with the precardinal vein and vagus nerve, the inner and outer nuclear layer of the retina, limb, breast muscle, heart, gut and lung.

It localises to the cell membrane. It is found in the cell projection. The protein localises to the axon. Its subcellular location is the perikaryon. The protein resides in the cytoplasmic vesicle. It localises to the secretory vesicle. It is found in the synaptic vesicle membrane. The protein localises to the synapse. Its subcellular location is the synaptosome. The protein resides in the postsynaptic density. It localises to the neuron projection. It is found in the growth cone. It catalyses the reaction O-phospho-L-tyrosyl-[protein] + H2O = L-tyrosyl-[protein] + phosphate. Functionally, cell surface receptor that binds to glycosaminoglycans, including chondroitin sulfate proteoglycans and heparan sulfate proteoglycans. Binding to chondroitin sulfate and heparan sulfate proteoglycans has opposite effects on PTPRS oligomerization and regulation of neurite outgrowth. Contributes to the inhibition of neurite and axonal outgrowth by chondroitin sulfate proteoglycans, also after nerve transection. Plays a role in stimulating neurite outgrowth in response to the heparan sulfate proteoglycan GPC2. Required for normal brain development, especially for normal development of the pituitary gland and the olfactory bulb. Functions as tyrosine phosphatase. Mediates dephosphorylation of NTRK1, NTRK2 and NTRK3. Plays a role in down-regulation of signaling cascades that lead to the activation of Akt and MAP kinases. Down-regulates TLR9-mediated activation of NF-kappa-B, as well as production of TNF, interferon alpha and interferon beta. This chain is Receptor-type tyrosine-protein phosphatase S (PTPRS), found in Gallus gallus (Chicken).